The primary structure comprises 380 residues: Cobalt-precorrin-5B C(1)-methyltransferase (380 aa).

This sequence belongs to the CbiD family.

It carries out the reaction Co-precorrin-5B + S-adenosyl-L-methionine = Co-precorrin-6A + S-adenosyl-L-homocysteine. It functions in the pathway cofactor biosynthesis; adenosylcobalamin biosynthesis; cob(II)yrinate a,c-diamide from sirohydrochlorin (anaerobic route): step 6/10. Its function is as follows. Catalyzes the methylation of C-1 in cobalt-precorrin-5B to form cobalt-precorrin-6A. This chain is Cobalt-precorrin-5B C(1)-methyltransferase, found in Salinispora tropica (strain ATCC BAA-916 / DSM 44818 / JCM 13857 / NBRC 105044 / CNB-440).